Reading from the N-terminus, the 69-residue chain is DNA-directed RNA polymerase subunit omega (69 aa).

Belongs to the RNA polymerase subunit omega family. The RNAP catalytic core consists of 2 alpha, 1 beta, 1 beta' and 1 omega subunit. When a sigma factor is associated with the core the holoenzyme is formed, which can initiate transcription.

It catalyses the reaction RNA(n) + a ribonucleoside 5'-triphosphate = RNA(n+1) + diphosphate. Promotes RNA polymerase assembly. Latches the N- and C-terminal regions of the beta' subunit thereby facilitating its interaction with the beta and alpha subunits. The sequence is that of DNA-directed RNA polymerase subunit omega from Pediococcus pentosaceus (strain ATCC 25745 / CCUG 21536 / LMG 10740 / 183-1w).